Consider the following 318-residue polypeptide: L-lactate dehydrogenase (318 aa).

Residues valine 18, aspartate 39, lysine 44, tyrosine 69, and 83 to 84 each bind NAD(+); that span reads GA. Glutamine 86 and arginine 92 together coordinate substrate. NAD(+) contacts are provided by residues serine 105, 122–124, and serine 147; that span reads VSN. 124 to 127 provides a ligand contact to substrate; the sequence is NPVD. 152–155 lines the substrate pocket; sequence DTSR. The Proton acceptor role is filled by histidine 179. Tyrosine 225 is subject to Phosphotyrosine. Position 234 (threonine 234) interacts with substrate.

It belongs to the LDH/MDH superfamily. LDH family. In terms of assembly, homotetramer.

The protein resides in the cytoplasm. The enzyme catalyses (S)-lactate + NAD(+) = pyruvate + NADH + H(+). It participates in fermentation; pyruvate fermentation to lactate; (S)-lactate from pyruvate: step 1/1. In terms of biological role, catalyzes the conversion of lactate to pyruvate. The sequence is that of L-lactate dehydrogenase from Clostridium botulinum (strain ATCC 19397 / Type A).